The sequence spans 162 residues: Phenazine biosynthesis protein PhzA1 (162 aa).

It belongs to the PhzA/PhzB family.

Its pathway is antibiotic biosynthesis; phenazine biosynthesis. In terms of biological role, involved in the biosynthesis of the antibiotic phenazine, a nitrogen-containing heterocyclic molecule. PhzA1 (operon phzA1B1C1E1F1G1) has a role in the biosynthesis of the phenazine during planktonic growth. This Pseudomonas aeruginosa (strain ATCC 15692 / DSM 22644 / CIP 104116 / JCM 14847 / LMG 12228 / 1C / PRS 101 / PAO1) protein is Phenazine biosynthesis protein PhzA1.